The chain runs to 809 residues: Protein PHOX3 (809 aa).

Residues 1–22 (MEKQNEEISTDDAETSQSQLVD) are disordered. TPR repeat units lie at residues 126–159 (AQGL…LPKD), 164–199 (SHVR…TPDH), 200–233 (NKAL…DPKN), 235–265 (MASE…PPDY), and 274–311 (AALW…EKKN). A disordered region spans residues 288–339 (TKKSNQVEEKSEGEGEDVEPEKKNNVLAEKGKEKIKMKVKGKQSDKRSDTSK). Ser298 carries the phosphoserine modification. Residues 307-339 (PEKKNNVLAEKGKEKIKMKVKGKQSDKRSDTSK) are compositionally biased toward basic and acidic residues. One can recognise a PB1 domain in the interval 359–438 (NKDVKFVYSD…GTMRFYVVEV (80 aa)). TPR repeat units lie at residues 508 to 541 (SEAM…SLLN), 563 to 597 (ESVS…KPEC), and 615 to 648 (SWYY…IKKS). Positions 656-686 (ETGKESEPSQAGKTDCLTHEKDLGSSTQNNP) are disordered. The stretch at 709 to 741 (SIMEYKLDQPFWRESLEAAMEKFELAGTCKDDV) is one TPR 9 repeat.

In terms of biological role, carboxylate clamp type tetratricopeptide repeat protein that may act as a potential Hsp90/Hsp70 co-chaperone. Contributes to polar growth of root hairs. This chain is Protein PHOX3, found in Arabidopsis thaliana (Mouse-ear cress).